Reading from the N-terminus, the 232-residue chain is UPF0758 protein FN0909 (232 aa).

Positions 110–232 (KISNKDILLK…YFSFLEEGLI (123 aa)) constitute an MPN domain. Positions 181, 183, and 194 each coordinate Zn(2+). Positions 181 to 194 (HNHPSDNITPSKSD) match the JAMM motif motif.

This sequence belongs to the UPF0758 family.

The chain is UPF0758 protein FN0909 from Fusobacterium nucleatum subsp. nucleatum (strain ATCC 25586 / DSM 15643 / BCRC 10681 / CIP 101130 / JCM 8532 / KCTC 2640 / LMG 13131 / VPI 4355).